Here is a 357-residue protein sequence, read N- to C-terminus: SNF1-related protein kinase regulatory subunit gamma-like PV42b (357 aa).

CBS domains follow at residues 16-97 (MIDK…DGES), 113-185 (HCPE…SSQL), 198-273 (AIHN…WLPL), and 293-351 (STPG…ALLS).

The protein belongs to the 5'-AMP-activated protein kinase gamma subunit family. In terms of tissue distribution, expressed highly in rosette leaves, cauline leaves, open flowers, developing siliques and dry seeds, but at a low level in stems and floral buds.

In terms of biological role, plays redundant role with PV42a in regulating male gametogenesis and pollen tube guidance. In Arabidopsis thaliana (Mouse-ear cress), this protein is SNF1-related protein kinase regulatory subunit gamma-like PV42b (PV42B).